We begin with the raw amino-acid sequence, 445 residues long: ATP-dependent protease ATPase subunit HslU (445 aa).

ATP-binding positions include I17, 59–64, D254, E319, and R391; that span reads GVGKTE.

The protein belongs to the ClpX chaperone family. HslU subfamily. In terms of assembly, a double ring-shaped homohexamer of HslV is capped on each side by a ring-shaped HslU homohexamer. The assembly of the HslU/HslV complex is dependent on binding of ATP.

Its subcellular location is the cytoplasm. ATPase subunit of a proteasome-like degradation complex; this subunit has chaperone activity. The binding of ATP and its subsequent hydrolysis by HslU are essential for unfolding of protein substrates subsequently hydrolyzed by HslV. HslU recognizes the N-terminal part of its protein substrates and unfolds these before they are guided to HslV for hydrolysis. This chain is ATP-dependent protease ATPase subunit HslU, found in Pseudomonas fluorescens (strain Pf0-1).